A 246-amino-acid chain; its full sequence is Ly6/PLAUR domain-containing protein 4 (246 aa).

The N-terminal stretch at 1-26 is a signal peptide; it reads MILQAWRSLQLLYLLEAISLLPCTEA. N-linked (GlcNAc...) asparagine glycosylation is present at Asn117. Residues 142–223 form the UPAR/Ly6 domain; the sequence is CPSCVGKHDQ…INVLDKSEAV (82 aa). The GPI-anchor amidated alanine moiety is linked to residue Ala225. A propeptide spans 226–246 (removed in mature form); sequence GHCSQGISWSVLLCLLILLRD.

It localises to the cell membrane. In Mus musculus (Mouse), this protein is Ly6/PLAUR domain-containing protein 4 (Lypd4).